Consider the following 605-residue polypeptide: Protein spinster (605 aa).

The segment at 1–94 (MSLKHQKQSY…HPLGEHHHIP (94 aa)) is disordered. A compositionally biased stretch (low complexity) spans 27–38 (SSGSSGSSSSEE). Polar residues predominate over residues 55-67 (TTYSSQQLMPSDT). Basic residues predominate over residues 76–85 (RLRPHHHHHH). The helical transmembrane segment at 115–137 (FTVTVLCFVNLINYMDRFTIAGV) threads the bilayer. Asn149 carries an N-linked (GlcNAc...) asparagine glycan. 5 helical membrane-spanning segments follow: residues 153-173 (GLLQ…FGYL), 180-200 (PWIM…GSFM), 203-223 (FGWF…YSTI), 240-260 (MLAL…IVGS), and 271-291 (WALR…LLIK). Residue Asn319 is glycosylated (N-linked (GlcNAc...) asparagine). The next 5 membrane-spanning stretches (helical) occupy residues 329-349 (FTCV…FIYL), 367-387 (FNFG…GSFL), 401-421 (VICA…CLLV), 431-451 (LIFF…DILL), and 465-485 (FQIL…VGAI). N-linked (GlcNAc...) asparagine glycosylation is present at Asn519. The helical transmembrane segment at 558–578 (STSFVEVLGGIFFIFTACFII) threads the bilayer. Asn583 carries an N-linked (GlcNAc...) asparagine glycan.

It belongs to the major facilitator superfamily. Spinster (TC 2.A.1.49) family. As to expression, enriched in brain (at protein level).

The protein localises to the late endosome membrane. It is found in the lysosome membrane. In terms of biological role, probable sphingolipid transporter that plays a central role in endosomes and/or lysosomes storage. Involved in TGF-beta-mediated synaptic growth regulation both pre- and postsynaptically via its function in endosomal storage regulation. Also required during oogenesis by regulating yolk spheres storage. The protein is Protein spinster (spin) of Drosophila melanogaster (Fruit fly).